Here is a 977-residue protein sequence, read N- to C-terminus: 2-oxoglutarate dehydrogenase E1 component (977 aa).

The RPE1 insert domain occupies 77–125 (VLNNRHLAKPAYREEFKGDTERSTAAYIDIREDASTGSTSKLPLEAKFG).

Belongs to the alpha-ketoglutarate dehydrogenase family. As to quaternary structure, homodimer. Part of the 2-oxoglutarate dehydrogenase (OGDH) complex composed of E1 (2-oxoglutarate dehydrogenase), E2 (dihydrolipoamide succinyltransferase) and E3 (dihydrolipoamide dehydrogenase); the complex contains multiple copies of the three enzymatic components (E1, E2 and E3). It depends on thiamine diphosphate as a cofactor.

It catalyses the reaction N(6)-[(R)-lipoyl]-L-lysyl-[protein] + 2-oxoglutarate + H(+) = N(6)-[(R)-S(8)-succinyldihydrolipoyl]-L-lysyl-[protein] + CO2. Functionally, E1 component of the 2-oxoglutarate dehydrogenase (OGDH) complex which catalyzes the decarboxylation of 2-oxoglutarate, the first step in the conversion of 2-oxoglutarate to succinyl-CoA and CO(2). The chain is 2-oxoglutarate dehydrogenase E1 component (sucA) from Rickettsia felis (strain ATCC VR-1525 / URRWXCal2) (Rickettsia azadi).